The chain runs to 373 residues: Probable G-protein coupled receptor 173 (373 aa).

At methionine 1–leucine 26 the chain is on the extracellular side. The N-linked (GlcNAc...) asparagine glycan is linked to asparagine 3. A helical transmembrane segment spans residues valine 27–valine 47. Topologically, residues leucine 48 to tyrosine 59 are cytoplasmic. The helical transmembrane segment at phenylalanine 60 to leucine 80 threads the bilayer. The Extracellular portion of the chain corresponds to alanine 81–lysine 97. Cysteines 96 and 174 form a disulfide. Residues isoleucine 98–serine 118 traverse the membrane as a helical segment. Residues valine 119–threonine 139 lie on the Cytoplasmic side of the membrane. A helical membrane pass occupies residues cysteine 140 to phenylalanine 160. Residues aspartate 161–glycine 188 lie on the Extracellular side of the membrane. Asparagine 184 is a glycosylation site (N-linked (GlcNAc...) asparagine). Residues phenylalanine 189–leucine 209 traverse the membrane as a helical segment. Residues phenylalanine 210–methionine 287 are Cytoplasmic-facing. Residues phenylalanine 288–tryptophan 308 form a helical membrane-spanning segment. The Extracellular portion of the chain corresponds to arginine 309–leucine 322. A helical transmembrane segment spans residues alanine 323–leucine 343. Topologically, residues asparagine 344–methionine 373 are cytoplasmic.

This sequence belongs to the G-protein coupled receptor 1 family.

The protein resides in the cell membrane. Its function is as follows. Is a receptor for the SMIM20 derived peptides Phoenixin-14 and Phoenixin-20. It mediates the Phoenixin-14 and Phoenixin-20 augmentation of gonadotropin-releasing hormone (GNRH) signaling in the hypothalamus and pituitary gland. In the ovary, it mediates the effects of Phoenixin-14 and Phoenixin-20 induced granulosa cell proliferation during follicular growth. In Bos taurus (Bovine), this protein is Probable G-protein coupled receptor 173 (GPR173).